The chain runs to 323 residues: 2-methylene-furan-3-one reductase (323 aa).

NADP(+) contacts are provided by residues lysine 59, 174-175 (GV), 197-200 (STKK), tyrosine 216, isoleucine 254, 265-267 (FVL), and 312-313 (RA). Position 59 (lysine 59) interacts with substrate.

This sequence belongs to the zinc-containing alcohol dehydrogenase family. Quinone oxidoreductase subfamily. Monomer. The N-terminus is blocked. Expressed in parenchyma tissues of red fruits. Not found in vascular tissues. Also detected in the achenes.

The catalysed reaction is 4-hydroxy-2,5-dimethyl-furan-3(2H)-one + NADP(+) = 4-hydroxy-5-methyl-2-methylenefuran-3(2H)-one + NADPH + H(+). Enone oxidoreductase involved in the biosynthesis of 4-hydroxy-2,5-dimethyl-3(2H)-furanone (HDMF or furaneol), the key flavor compound in strawberries. Can use both NADH and NADPH as the electron donor. This chain is 2-methylene-furan-3-one reductase (EO), found in Fragaria ananassa (Strawberry).